The primary structure comprises 693 residues: Elongation factor G 1 (693 aa).

In terms of domain architecture, tr-type G spans 4 to 281 (NKLRNIGISA…AVTRFLPSPH (278 aa)). GTP is bound by residues 13–20 (AHIDSGKT), 80–84 (DTPGH), and 134–137 (NKCD).

Belongs to the TRAFAC class translation factor GTPase superfamily. Classic translation factor GTPase family. EF-G/EF-2 subfamily.

It localises to the cytoplasm. In terms of biological role, catalyzes the GTP-dependent ribosomal translocation step during translation elongation. During this step, the ribosome changes from the pre-translocational (PRE) to the post-translocational (POST) state as the newly formed A-site-bound peptidyl-tRNA and P-site-bound deacylated tRNA move to the P and E sites, respectively. Catalyzes the coordinated movement of the two tRNA molecules, the mRNA and conformational changes in the ribosome. The polypeptide is Elongation factor G 1 (Borrelia garinii subsp. bavariensis (strain ATCC BAA-2496 / DSM 23469 / PBi) (Borreliella bavariensis)).